The following is a 180-amino-acid chain: Free methionine-R-sulfoxide reductase (180 aa).

The GAF domain maps to 99–177; sequence GVCGTAASTK…KLAKLINKSC (79 aa).

It belongs to the free Met sulfoxide reductase family.

It localises to the cytoplasm. Its subcellular location is the nucleus. It catalyses the reaction [thioredoxin]-disulfide + L-methionine + H2O = L-methionine (R)-S-oxide + [thioredoxin]-dithiol. Its function is as follows. Catalyzes the reversible oxidation-reduction of the R-enantiomer of free methionine sulfoxide to methionine. Does not act on S-enantiomer of free methionine sulfoxide or R-enantiomer of dabsylated methionine sulfoxide. Involved in protection against oxidative stress. In Saccharomyces cerevisiae (strain ATCC 204508 / S288c) (Baker's yeast), this protein is Free methionine-R-sulfoxide reductase.